The following is a 361-amino-acid chain: MAMLVDPPNGIRQEGKHYYTMWQTLFEIDTKYVPIKPIGRGAYGVVCSSINSETNERVAIKKIHNVFENRIDALRTLRELKLLRHVRHENVISLKDVMLPTHRYSFRDVYLVYELMDSDLNQIIKSSQSLSDDHCKYFLFQLLRGLKYLHSANILHRDLKPGNLLVNANCDLKICDFGLARTYEQFMTEYVVTRWYRAPELLLCCDNYGTSIDVWSVGCIFAEILGRKPIFPGTECLNQLKLIINVVGSQQDWDLQFIDNQKARRFIKSLPFSKGTHFSHIYPHANPLAIDLLQRMLVFDPTKRISVSDALLHPYMEGLLEPECNPSENVPVSSLEIDENMEGDMIREMMWEEMLHYLPRA.

The region spanning 32-316 is the Protein kinase domain; sequence YVPIKPIGRG…VSDALLHPYM (285 aa). ATP is bound by residues 38 to 46 and K61; that span reads IGRGAYGVV. The Proton acceptor role is filled by D158. T188 carries the phosphothreonine modification. The short motif at 188–190 is the TXY element; it reads TEY. The residue at position 190 (Y190) is a Phosphotyrosine. A Phosphothreonine modification is found at T193.

This sequence belongs to the protein kinase superfamily. CMGC Ser/Thr protein kinase family. MAP kinase subfamily. In terms of assembly, interacts with MKK3. Dually phosphorylated on Thr-188 and Tyr-190, which activates the enzyme.

The enzyme catalyses L-seryl-[protein] + ATP = O-phospho-L-seryl-[protein] + ADP + H(+). It carries out the reaction L-threonyl-[protein] + ATP = O-phospho-L-threonyl-[protein] + ADP + H(+). With respect to regulation, activated by threonine and tyrosine phosphorylation. This chain is Mitogen-activated protein kinase 14 (MPK14), found in Arabidopsis thaliana (Mouse-ear cress).